We begin with the raw amino-acid sequence, 403 residues long: Dual-specificity RNA methyltransferase RlmN (403 aa).

Glu126 functions as the Proton acceptor in the catalytic mechanism. The Radical SAM core domain maps to 132–375 (ETDRGTLCVS…VRTPRGRDIL (244 aa)). An intrachain disulfide couples Cys139 to Cys378. 3 residues coordinate [4Fe-4S] cluster: Cys146, Cys150, and Cys153. S-adenosyl-L-methionine contacts are provided by residues 204-205 (GE), Ser236, 258-260 (SLH), and Asn335. Cys378 functions as the S-methylcysteine intermediate in the catalytic mechanism.

It belongs to the radical SAM superfamily. RlmN family. [4Fe-4S] cluster is required as a cofactor.

The protein resides in the cytoplasm. The enzyme catalyses adenosine(2503) in 23S rRNA + 2 reduced [2Fe-2S]-[ferredoxin] + 2 S-adenosyl-L-methionine = 2-methyladenosine(2503) in 23S rRNA + 5'-deoxyadenosine + L-methionine + 2 oxidized [2Fe-2S]-[ferredoxin] + S-adenosyl-L-homocysteine. It carries out the reaction adenosine(37) in tRNA + 2 reduced [2Fe-2S]-[ferredoxin] + 2 S-adenosyl-L-methionine = 2-methyladenosine(37) in tRNA + 5'-deoxyadenosine + L-methionine + 2 oxidized [2Fe-2S]-[ferredoxin] + S-adenosyl-L-homocysteine. Functionally, specifically methylates position 2 of adenine 2503 in 23S rRNA and position 2 of adenine 37 in tRNAs. m2A2503 modification seems to play a crucial role in the proofreading step occurring at the peptidyl transferase center and thus would serve to optimize ribosomal fidelity. This chain is Dual-specificity RNA methyltransferase RlmN, found in Bradyrhizobium sp. (strain ORS 278).